Consider the following 100-residue polypeptide: Replication restart protein PriB (100 aa).

One can recognise an SSB domain in the interval 1–100 (MTNRMELSGT…VLHADDIIHI (100 aa)).

It belongs to the PriB family. As to quaternary structure, homodimer. Interacts with PriA and DnaT. Component of the replication restart primosome. Primosome assembly occurs via a 'hand-off' mechanism. PriA binds to replication forks, subsequently PriB then DnaT bind; DnaT then displaces ssDNA to generate the helicase loading substrate.

In terms of biological role, involved in the restart of stalled replication forks, which reloads the replicative helicase on sites other than the origin of replication; the PriA-PriB pathway is the major replication restart pathway. During primosome assembly it facilitates complex formation between PriA and DnaT on DNA; stabilizes PriA on DNA. Stimulates the DNA unwinding activity of PriA helicase. The protein is Replication restart protein PriB of Vibrio vulnificus (strain CMCP6).